Reading from the N-terminus, the 179-residue chain is Large ribosomal subunit protein uL5 (179 aa).

It belongs to the universal ribosomal protein uL5 family. As to quaternary structure, part of the 50S ribosomal subunit; part of the 5S rRNA/L5/L18/L25 subcomplex. Contacts the 5S rRNA and the P site tRNA. Forms a bridge to the 30S subunit in the 70S ribosome.

Functionally, this is one of the proteins that bind and probably mediate the attachment of the 5S RNA into the large ribosomal subunit, where it forms part of the central protuberance. In the 70S ribosome it contacts protein S13 of the 30S subunit (bridge B1b), connecting the 2 subunits; this bridge is implicated in subunit movement. Contacts the P site tRNA; the 5S rRNA and some of its associated proteins might help stabilize positioning of ribosome-bound tRNAs. The sequence is that of Large ribosomal subunit protein uL5 from Neisseria meningitidis serogroup C (strain 053442).